The sequence spans 91 residues: UPF0358 protein Sca_0738 (91 aa).

Belongs to the UPF0358 family.

The protein is UPF0358 protein Sca_0738 of Staphylococcus carnosus (strain TM300).